The sequence spans 185 residues: Anaphase-promoting complex subunit 10 (185 aa).

Threonine 2 is subject to N-acetylthreonine. Residues threonine 2 to arginine 185 enclose the DOC domain. An N6-acetyllysine modification is found at lysine 169.

It belongs to the APC10 family. In terms of assembly, the mammalian APC/C is composed at least of 14 distinct subunits ANAPC1, ANAPC2, CDC27/APC3, ANAPC4, ANAPC5, CDC16/APC6, ANAPC7, CDC23/APC8, ANAPC10, ANAPC11, CDC26/APC12, ANAPC13, ANAPC15 and ANAPC16 that assemble into a complex of at least 19 chains with a combined molecular mass of around 1.2 MDa; APC/C interacts with FZR1 and FBXO5. The C-terminus of APC10 binds to CDC27/APC3. Interacts with PIWIL1; interaction only takes place when PIWIL1 binds piRNA. Interacts with FBXO43; the interaction is direct.

It participates in protein modification; protein ubiquitination. Its function is as follows. Component of the anaphase promoting complex/cyclosome (APC/C), a cell cycle-regulated E3 ubiquitin ligase that controls progression through mitosis and the G1 phase of the cell cycle. The APC/C complex acts by mediating ubiquitination and subsequent degradation of target proteins: it mainly mediates the formation of 'Lys-11'-linked polyubiquitin chains and, to a lower extent, the formation of 'Lys-48'- and 'Lys-63'-linked polyubiquitin chains. The APC/C complex catalyzes assembly of branched 'Lys-11'-/'Lys-48'-linked branched ubiquitin chains on target proteins. The polypeptide is Anaphase-promoting complex subunit 10 (ANAPC10) (Homo sapiens (Human)).